Consider the following 125-residue polypeptide: SOSS complex subunit C homolog (125 aa).

The interval 43-77 (MPSPQLLGQPTVAPEFLPQGVGLPTNATPPRSAFN) is disordered. Positions 67–77 (TNATPPRSAFN) are enriched in polar residues.

The protein belongs to the SOSS-C family.

The polypeptide is SOSS complex subunit C homolog (Drosophila persimilis (Fruit fly)).